Reading from the N-terminus, the 414-residue chain is COUP transcription factor 2 (414 aa).

The interval 1–72 (MAMVVSTWRD…PGGPGSDKQQ (72 aa)) is disordered. Residues 27 to 37 (PPVPGPPPGAP) are compositionally biased toward pro residues. Positions 38–54 (HTPQTPGQGGPASTPAQ) are enriched in low complexity. Thr-51 is subject to Phosphothreonine. Residues 76–151 (HIECVVCGDK…VGMRREAVQR (76 aa)) constitute a DNA-binding region (nuclear receptor). 2 consecutive NR C4-type zinc fingers follow at residues 79–99 (CVVC…CEGC) and 115–139 (CRAN…LKKC). The tract at residues 117–414 (ANRNCPIDQH…SFNWPYMAIQ (298 aa)) is interaction with ZFPM2. An NR LBD domain is found at 177-403 (YLSGYISLLL…TLIRDMLLSG (227 aa)). The segment at 337–414 (LQEKSQCALE…SFNWPYMAIQ (78 aa)) is important for dimerization.

The protein belongs to the nuclear hormone receptor family. NR2 subfamily. Interacts with SQSTM1. Binds DNA as a dimer; homodimer or heterodimer with NR2F6. Interacts with NCOA1, NCOA2, NCOA3 and PPARGC1A. Interacts with ZFPM2.

It localises to the nucleus. In terms of biological role, ligand-activated transcription factor. Activated by high concentrations of 9-cis-retinoic acid and all-trans-retinoic acid, but not by dexamethasone, cortisol or progesterone (in vitro). Regulation of the apolipoprotein A-I gene transcription. Binds to DNA site A. May be required to establish ovary identity during early gonad development. This chain is COUP transcription factor 2 (Nr2f2), found in Rattus norvegicus (Rat).